A 296-amino-acid polypeptide reads, in one-letter code: GTPase Era (296 aa).

An Era-type G domain is found at 3–170; the sequence is KSGFVTIVGR…KELMFKYIPE (168 aa). The tract at residues 11–18 is G1; that stretch reads GRPNVGKS. GTP is bound at residue 11–18; that stretch reads GRPNVGKS. The tract at residues 37–41 is G2; that stretch reads QTTRN. A G3 region spans residues 58–61; it reads DTPG. Residues 58–62 and 120–123 contribute to the GTP site; these read DTPGI and NKID. The segment at 120–123 is G4; that stretch reads NKID. The interval 149 to 151 is G5; sequence ISA. The region spanning 201–278 is the KH type-2 domain; the sequence is LSEEVPHGIA…YIRLWVKVKE (78 aa).

The protein belongs to the TRAFAC class TrmE-Era-EngA-EngB-Septin-like GTPase superfamily. Era GTPase family. In terms of assembly, monomer.

The protein localises to the cytoplasm. The protein resides in the cell membrane. Functionally, an essential GTPase that binds both GDP and GTP, with rapid nucleotide exchange. Plays a role in 16S rRNA processing and 30S ribosomal subunit biogenesis and possibly also in cell cycle regulation and energy metabolism. In Clostridium botulinum (strain Okra / Type B1), this protein is GTPase Era.